The following is a 392-amino-acid chain: Putative pectate lyase 21 (392 aa).

The N-terminal stretch at 1–21 is a signal peptide; sequence MSIVCTFFLFLLNTSFAFAFA. Residue Asn-38 is glycosylated (N-linked (GlcNAc...) asparagine). 3 residues coordinate Ca(2+): Asp-189, Asp-213, and Asp-217. N-linked (GlcNAc...) asparagine glycosylation is present at Asn-220. Residue Arg-269 is part of the active site.

The protein belongs to the polysaccharide lyase 1 family. Ca(2+) serves as cofactor.

It carries out the reaction Eliminative cleavage of (1-&gt;4)-alpha-D-galacturonan to give oligosaccharides with 4-deoxy-alpha-D-galact-4-enuronosyl groups at their non-reducing ends.. The protein operates within glycan metabolism; pectin degradation; 2-dehydro-3-deoxy-D-gluconate from pectin: step 2/5. This Arabidopsis thaliana (Mouse-ear cress) protein is Putative pectate lyase 21.